Here is a 186-residue protein sequence, read N- to C-terminus: Tumor necrosis factor alpha-induced protein 8-like protein 1 (186 aa).

This sequence belongs to the TNFAIP8 family. As to quaternary structure, interacts with FBXW5; TNFAIP8L1 competes with TSC2 to bind FBXW5 increasing TSC2 stability by preventing its ubiquitination.

Its subcellular location is the cytoplasm. Acts as a negative regulator of mTOR activity. The sequence is that of Tumor necrosis factor alpha-induced protein 8-like protein 1 (TNFAIP8L1) from Bos taurus (Bovine).